A 190-amino-acid polypeptide reads, in one-letter code: Lipid A acyltransferase PagP (190 aa).

Positions 1-18 (MKRLISCLTIICALNASA) are cleaved as a signal peptide. Active-site residues include His60, Asp103, and Ser104.

It belongs to the lipid A palmitoyltransferase family. Homodimer.

The protein resides in the cell outer membrane. The catalysed reaction is a lipid A + a 1,2-diacyl-sn-glycero-3-phosphocholine = a hepta-acyl lipid A + a 2-acyl-sn-glycero-3-phosphocholine. It catalyses the reaction a lipid IVA + a 1,2-diacyl-sn-glycero-3-phosphocholine = a lipid IVB + a 2-acyl-sn-glycero-3-phosphocholine. The enzyme catalyses a lipid IIA + a 1,2-diacyl-sn-glycero-3-phosphocholine = a lipid IIB + a 2-acyl-sn-glycero-3-phosphocholine. Transfers a fatty acid residue from the sn-1 position of a phospholipid to the N-linked hydroxyfatty acid chain on the proximal unit of lipid A or its precursors. This chain is Lipid A acyltransferase PagP, found in Legionella pneumophila serogroup 1 (strain 2300/99 Alcoy).